Reading from the N-terminus, the 746-residue chain is Ribosome biogenesis protein BOP1 (746 aa).

The disordered stretch occupies residues 1–116; that stretch reads MAGSRGAGRT…PCPRTEMASA (116 aa). A compositionally biased stretch (low complexity) spans 43-65; it reads SHSTGSDSGVSDSEESVFSGLED. A compositionally biased stretch (acidic residues) spans 66 to 87; the sequence is SGSDSSEDDDEGDEEGEDGALD. Positions 88-99 are enriched in basic and acidic residues; that stretch reads DEGHSGIKKTTE. At Thr106 the chain carries Phosphothreonine. Tyr122 is subject to Phosphotyrosine. Phosphoserine is present on residues Ser126 and Ser127. The tract at residues 265-427 is sufficient for nucleolar localization; that stretch reads MGWIQPRRPR…CLSVSPGGQW (163 aa). 7 WD repeats span residues 411 to 450, 452 to 492, 532 to 576, 577 to 615, 618 to 657, 661 to 700, and 716 to 746; these read GHSD…CVRT, PVGG…RLVA, CHGK…SPFR, RSHG…LTKK, PNCK…KPYR, HHKK…DLLQ, and TRDL…RLFT.

The protein belongs to the WD repeat BOP1/ERB1 family. Component of the PeBoW complex, composed of BOP1, PES1 and WDR12. The complex is held together by BOP1, which interacts with PES1 via its N-terminal domain and with WDR12 via a high-affinity interaction between the seven-bladed beta-propeller domains of the 2 proteins. The NOP7 complex associates with the 66S pre-ribosome. The PeBoW complex associates with DDX27, BOP1 interacts directly with DDX27.

Its subcellular location is the nucleus. It localises to the nucleolus. It is found in the nucleoplasm. In terms of biological role, component of the PeBoW complex, which is required for maturation of 28S and 5.8S ribosomal RNAs and formation of the 60S ribosome. In Homo sapiens (Human), this protein is Ribosome biogenesis protein BOP1.